The following is a 406-amino-acid chain: Arginine deiminase (406 aa).

Cysteine 396 (amidino-cysteine intermediate) is an active-site residue.

This sequence belongs to the arginine deiminase family.

It is found in the cytoplasm. It carries out the reaction L-arginine + H2O = L-citrulline + NH4(+). It functions in the pathway amino-acid degradation; L-arginine degradation via ADI pathway; carbamoyl phosphate from L-arginine: step 1/2. The polypeptide is Arginine deiminase (Aliivibrio salmonicida (strain LFI1238) (Vibrio salmonicida (strain LFI1238))).